The sequence spans 261 residues: MTHQTHAYHMVNPSPWPLTGAMSALLLTSGLIMWFHFNSYTLLLLGLLTNLISSYQWWRDIVREGTYQGHHTKIVQKGLRYGMILFIISEVFFFLGFFWAFYHSSLAPTPELGGCWPPTGISPLNPLEVPLLNTSILLASGVSITWAHHSLMEGNRKQMLQALTITIALGLYFTALQAMEYYEASFTISDGVYGSTFFVATGFHGLHVIIGTTFLITCLVRQTLYHFTSNHHFGFEAAAWYWHFVDVVWLFLYVSIYWWGS.

At 1–15 the chain is on the mitochondrial matrix side; it reads MTHQTHAYHMVNPSP. Residues 16–34 traverse the membrane as a helical segment; the sequence is WPLTGAMSALLLTSGLIMW. The Mitochondrial intermembrane portion of the chain corresponds to 35-40; that stretch reads FHFNSY. A helical transmembrane segment spans residues 41-66; sequence TLLLLGLLTNLISSYQWWRDIVREGT. Residues 67–72 lie on the Mitochondrial matrix side of the membrane; the sequence is YQGHHT. Residues 73 to 105 traverse the membrane as a helical segment; the sequence is KIVQKGLRYGMILFIISEVFFFLGFFWAFYHSS. Residues 106–128 are Mitochondrial intermembrane-facing; sequence LAPTPELGGCWPPTGISPLNPLE. The chain crosses the membrane as a helical span at residues 129–152; it reads VPLLNTSILLASGVSITWAHHSLM. Topologically, residues 153–155 are mitochondrial matrix; sequence EGN. A helical membrane pass occupies residues 156-183; that stretch reads RKQMLQALTITIALGLYFTALQAMEYYE. Topologically, residues 184–190 are mitochondrial intermembrane; sequence ASFTISD. A helical membrane pass occupies residues 191–223; it reads GVYGSTFFVATGFHGLHVIIGTTFLITCLVRQT. Topologically, residues 224-232 are mitochondrial matrix; that stretch reads LYHFTSNHH. The helical transmembrane segment at 233 to 256 threads the bilayer; sequence FGFEAAAWYWHFVDVVWLFLYVSI. At 257–261 the chain is on the mitochondrial intermembrane side; sequence YWWGS.

This sequence belongs to the cytochrome c oxidase subunit 3 family. As to quaternary structure, component of the cytochrome c oxidase (complex IV, CIV), a multisubunit enzyme composed of 14 subunits. The complex is composed of a catalytic core of 3 subunits MT-CO1, MT-CO2 and MT-CO3, encoded in the mitochondrial DNA, and 11 supernumerary subunits COX4I, COX5A, COX5B, COX6A, COX6B, COX6C, COX7A, COX7B, COX7C, COX8 and NDUFA4, which are encoded in the nuclear genome. The complex exists as a monomer or a dimer and forms supercomplexes (SCs) in the inner mitochondrial membrane with NADH-ubiquinone oxidoreductase (complex I, CI) and ubiquinol-cytochrome c oxidoreductase (cytochrome b-c1 complex, complex III, CIII), resulting in different assemblies (supercomplex SCI(1)III(2)IV(1) and megacomplex MCI(2)III(2)IV(2)).

It is found in the mitochondrion inner membrane. The catalysed reaction is 4 Fe(II)-[cytochrome c] + O2 + 8 H(+)(in) = 4 Fe(III)-[cytochrome c] + 2 H2O + 4 H(+)(out). Component of the cytochrome c oxidase, the last enzyme in the mitochondrial electron transport chain which drives oxidative phosphorylation. The respiratory chain contains 3 multisubunit complexes succinate dehydrogenase (complex II, CII), ubiquinol-cytochrome c oxidoreductase (cytochrome b-c1 complex, complex III, CIII) and cytochrome c oxidase (complex IV, CIV), that cooperate to transfer electrons derived from NADH and succinate to molecular oxygen, creating an electrochemical gradient over the inner membrane that drives transmembrane transport and the ATP synthase. Cytochrome c oxidase is the component of the respiratory chain that catalyzes the reduction of oxygen to water. Electrons originating from reduced cytochrome c in the intermembrane space (IMS) are transferred via the dinuclear copper A center (CU(A)) of subunit 2 and heme A of subunit 1 to the active site in subunit 1, a binuclear center (BNC) formed by heme A3 and copper B (CU(B)). The BNC reduces molecular oxygen to 2 water molecules using 4 electrons from cytochrome c in the IMS and 4 protons from the mitochondrial matrix. The polypeptide is Cytochrome c oxidase subunit 3 (MT-CO3) (Ornithorhynchus anatinus (Duckbill platypus)).